We begin with the raw amino-acid sequence, 179 residues long: Ribosomal-protein-serine acetyltransferase (179 aa).

The N-acetyltransferase domain maps to 11-172; it reads LELHAVAENH…NDAYDDVNLY (162 aa).

The protein belongs to the acetyltransferase family. RimL subfamily.

It is found in the cytoplasm. It catalyses the reaction N-terminal L-seryl-[ribosomal protein bL12] + acetyl-CoA = N-terminal N(alpha)-acetyl-L-seryl-[ribosomal protein bL12] + CoA + H(+). This enzyme acetylates the N-terminal serine of ribosomal protein bL12, converting it into the acetylated form of bL12 known as bL7. This chain is Ribosomal-protein-serine acetyltransferase, found in Escherichia coli (strain K12).